A 281-amino-acid polypeptide reads, in one-letter code: Acetyl-coenzyme A carboxylase carboxyl transferase subunit beta (281 aa).

Residues 23–281 (IWTKCGSCQA…SLLVKLHYKN (259 aa)) form the CoA carboxyltransferase N-terminal domain. Zn(2+) is bound by residues cysteine 27, cysteine 30, cysteine 46, and cysteine 49. The C4-type zinc finger occupies 27–49 (CGSCQAVLYKSELEKLQEVCPKC).

The protein belongs to the AccD/PCCB family. Acetyl-CoA carboxylase is a heterohexamer composed of biotin carboxyl carrier protein (AccB), biotin carboxylase (AccC) and two subunits each of ACCase subunit alpha (AccA) and ACCase subunit beta (AccD). Requires Zn(2+) as cofactor.

It localises to the cytoplasm. It carries out the reaction N(6)-carboxybiotinyl-L-lysyl-[protein] + acetyl-CoA = N(6)-biotinyl-L-lysyl-[protein] + malonyl-CoA. Its pathway is lipid metabolism; malonyl-CoA biosynthesis; malonyl-CoA from acetyl-CoA: step 1/1. Its function is as follows. Component of the acetyl coenzyme A carboxylase (ACC) complex. Biotin carboxylase (BC) catalyzes the carboxylation of biotin on its carrier protein (BCCP) and then the CO(2) group is transferred by the transcarboxylase to acetyl-CoA to form malonyl-CoA. The polypeptide is Acetyl-coenzyme A carboxylase carboxyl transferase subunit beta (Alteromonas mediterranea (strain DSM 17117 / CIP 110805 / LMG 28347 / Deep ecotype)).